A 398-amino-acid polypeptide reads, in one-letter code: WW domain-binding protein 4 (398 aa).

Residues 11-42 (KFCDYCKCWIADNRPSIDFHERGKNHKENVAK) form a Matrin-type zinc finger. Disordered stretches follow at residues 84 to 182 (GIKP…SVWV), 200 to 274 (VSTW…KLSP), 300 to 350 (LASK…PPVL), and 379 to 398 (KKREFENGKSRNLRQRLDDQ). The span at 92-103 (PSSTLNKTQSIT) shows a compositional bias: polar residues. Basic residues predominate over residues 112–125 (KKEKKEKKEKKKKT). The segment covering 126-139 (REGTSESPKTEPKE) has biased composition (basic and acidic residues). 2 WW domains span residues 134-167 (KTEPKEWVQGLSPEGYTYYYNTKTGESQWEKPKG) and 175-208 (SHTGSVWVEGVSEDGHTYYYNTQTGVSTWEKPDG). A compositionally biased stretch (polar residues) spans 169-178 (QGNSKTSHTG). Basic and acidic residues predominate over residues 221–232 (KHSEEADSRASE). Acidic residues predominate over residues 233-242 (SDSEQEDSES). Over residues 305–316 (ASSDESKTDTYG) the composition is skewed to basic and acidic residues. Residues 324 to 333 (EEEEEPDEKV) are compositionally biased toward acidic residues.

Component of the spliceosome B complex. Associated with U2 snRNPs. Binds splicing factors SNRPB, SNRPC and SF1.

Its subcellular location is the nucleus. The protein resides in the nucleus speckle. Its function is as follows. Involved in pre-mRNA splicing as a component of the spliceosome. May play a role in cross-intron bridging of U1 and U2 snRNPs in the mammalian A complex. The sequence is that of WW domain-binding protein 4 (WBP4) from Gallus gallus (Chicken).